The following is a 190-amino-acid chain: Mediator of RNA polymerase II transcription subunit 28 (190 aa).

The stretch at 76–108 (MLIKDENQDLSIEIQRKEALLQKHYNRLEEWKA) forms a coiled coil.

This sequence belongs to the Mediator complex subunit 28 family. In terms of assembly, component of the Mediator complex.

Its subcellular location is the nucleus. Its function is as follows. Component of the Mediator complex, a coactivator involved in the regulated transcription of nearly all RNA polymerase II-dependent genes. Mediator functions as a bridge to convey information from gene-specific regulatory proteins to the basal RNA polymerase II transcription machinery. Mediator is recruited to promoters by direct interactions with regulatory proteins and serves as a scaffold for the assembly of a functional preinitiation complex with RNA polymerase II and the general transcription factors. In Drosophila pseudoobscura pseudoobscura (Fruit fly), this protein is Mediator of RNA polymerase II transcription subunit 28 (MED28).